We begin with the raw amino-acid sequence, 206 residues long: Isochorismatase domain-containing protein 2A (206 aa).

Residue Lys26 is modified to N6-succinyllysine. N6-acetyllysine; alternate occurs at positions 93 and 178. 2 positions are modified to N6-succinyllysine; alternate: Lys93 and Lys178. Lys182 and Lys185 each carry N6-acetyllysine.

Belongs to the isochorismatase family. Interacts with CDKN2A. As to expression, ubiquitous. Expressed predominantly in uterus, stomach and urinary tract.

Its subcellular location is the cytoplasm. The protein resides in the nucleus. The polypeptide is Isochorismatase domain-containing protein 2A (Mus musculus (Mouse)).